Here is a 576-residue protein sequence, read N- to C-terminus: FtsZ-localized protein C (576 aa).

Interacts with FtsZ filaments.

Its subcellular location is the cytoplasm. It localises to the cell inner membrane. Membrane anchor for FtsZ. Binds and recruits FtsZ polymers to membranes early in the cell cycle. May also improve the efficiency of cytokinesis through the regulation of cell wall hydrolysis. This chain is FtsZ-localized protein C, found in Caulobacter vibrioides (strain NA1000 / CB15N) (Caulobacter crescentus).